Consider the following 239-residue polypeptide: Adenylate kinase 2 (239 aa).

An ATP-binding site is contributed by Gly29–Thr34. An NMP region spans residues Ser49 to Val78. AMP-binding positions include Thr50, Arg55, Gly76–Val78, Gly104–Arg107, and Gln111. The LID stretch occupies residues Gly145–Asp182. Residues Arg146 and Ser155–Tyr156 each bind ATP. AMP-binding residues include Arg179 and Arg190.

Belongs to the adenylate kinase family. AK2 subfamily. As to quaternary structure, monomer. Mg(2+) serves as cofactor.

The protein localises to the cytoplasm. The protein resides in the cytosol. It catalyses the reaction AMP + ATP = 2 ADP. It participates in purine metabolism; purine nucleotide biosynthesis. In terms of biological role, catalyzes the reversible transfer of the terminal phosphate group between ATP and AMP. Plays an important role in cellular energy homeostasis and in adenine nucleotide metabolism. The sequence is that of Adenylate kinase 2 from Schistosoma mansoni (Blood fluke).